We begin with the raw amino-acid sequence, 94 residues long: Defensin alpha 5 (94 aa).

Positions 1–19 (MRTIAILAAILLVALQAQA) are cleaved as a signal peptide. Disulfide bonds link C65/C93, C67/C82, and C72/C92.

Belongs to the alpha-defensin family. Homodimer. Homotetramer. Interacts with B.antracis lef/lethal factor. Post-translationally, glycosylated. Proteolytically cleaved at Arg-62 by trypsin. Both the propeptide form proHD5/HD5(20-94) and HD5(56-94) are cleaved into the lumenal peptide form HD5(63-94) by trypsin. Unprocessed proHD5 exerts antimicrobial activities, but peptide potency is enhanced by peptide processing. Proteolytically cleaved in duodenal fluid; derived fragments are antimicrobially active against commensal bacteria (in vitro). In terms of processing, (Microbial infection) The disulfide bridges and homodimerization are a prerequisite for the enhancement of S.flexneri adhesion and invasion. As to expression, expressed in the gastrointestinal, reproductive, and urinary tracts (at protein level). Expressed in Paneth cells of the small intestine (at protein level). Expressed throughout the urothelium of the lower urinary tract and in the collecting tubules of the kidney (at protein level). Expressed in stratified squamous epithelial cells of the female genital tract epithelia, such as in vagina, ectocervix, endocervix, endometrium, and fallopian tube (at protein level). Endometrial expression correlates with stages of the menstrual cycle: Expression is low during the early proliferative phase, increased during the mid- to late proliferative phase, peaks during the early secretory phase of the cycle, and decreases during the mid- to late secretory phase.

It localises to the secreted. Its subcellular location is the cytoplasmic vesicle. The protein localises to the secretory vesicle. In terms of biological role, host-defense peptide that maintains sterility in the urogenital system. Has antimicrobial activity against a wide range of bacteria, including Gram-negative E.coli, P.aeruginosa and S.typhimurium, and Gram-positive E.aerogenes, S.aureus, B.cereus, E.faecium and L.monocytogenes. Confers resistance to intestinal infection by S.typhimurium. Exhibits antimicrobial activity against enteric commensal bacteria such as B.adolescentis, L.acidophilus, B.breve, L.fermentum, B.longum and S.thermophilus. Binds to bacterial membranes and causes membrane disintegration. Induces the secretion of the chemokine IL-8 by intestinal epithelial cells. Binds to B.antracis lef/lethal factor, a major virulence factor from B.anthracis, and neutralizes its enzymatic activity. (Microbial infection) Acts as a target for S.flexneri infection by binding to the bacterium, possibly via bacterial surface proteins, and thereby augmenting infectivity via enhanced bacterial adhesion and invasion of epithelial cells and tissues. The protein is Defensin alpha 5 (DEFA5) of Homo sapiens (Human).